Here is a 159-residue protein sequence, read N- to C-terminus: SsrA-binding protein (159 aa).

The tract at residues 131–159 is disordered; it reads KGKKLHDKRESEKERDWNRQKSRLLKDNG. The segment covering 137–159 has biased composition (basic and acidic residues); the sequence is DKRESEKERDWNRQKSRLLKDNG.

It belongs to the SmpB family.

It is found in the cytoplasm. Functionally, required for rescue of stalled ribosomes mediated by trans-translation. Binds to transfer-messenger RNA (tmRNA), required for stable association of tmRNA with ribosomes. tmRNA and SmpB together mimic tRNA shape, replacing the anticodon stem-loop with SmpB. tmRNA is encoded by the ssrA gene; the 2 termini fold to resemble tRNA(Ala) and it encodes a 'tag peptide', a short internal open reading frame. During trans-translation Ala-aminoacylated tmRNA acts like a tRNA, entering the A-site of stalled ribosomes, displacing the stalled mRNA. The ribosome then switches to translate the ORF on the tmRNA; the nascent peptide is terminated with the 'tag peptide' encoded by the tmRNA and targeted for degradation. The ribosome is freed to recommence translation, which seems to be the essential function of trans-translation. This is SsrA-binding protein from Rhizobium leguminosarum bv. trifolii (strain WSM2304).